The chain runs to 133 residues: Small ribosomal subunit protein uS8 (133 aa).

This sequence belongs to the universal ribosomal protein uS8 family. Part of the 30S ribosomal subunit. Contacts proteins S5 and S12.

One of the primary rRNA binding proteins, it binds directly to 16S rRNA central domain where it helps coordinate assembly of the platform of the 30S subunit. The protein is Small ribosomal subunit protein uS8 of Nostoc punctiforme (strain ATCC 29133 / PCC 73102).